The sequence spans 552 residues: Thermosome subunit beta (552 aa).

The protein belongs to the TCP-1 chaperonin family. In terms of assembly, forms a Heterooligomeric complex of two stacked nine-membered rings; one of alpha and the other of beta subunits. In terms of processing, the N-terminus is blocked.

Functionally, molecular chaperone; binds unfolded polypeptides in vitro, and has a weak ATPase activity. In Sulfurisphaera tokodaii (strain DSM 16993 / JCM 10545 / NBRC 100140 / 7) (Sulfolobus tokodaii), this protein is Thermosome subunit beta (thsB).